A 415-amino-acid polypeptide reads, in one-letter code: Serine/threonine transporter SstT (415 aa).

8 consecutive transmembrane segments (helical) span residues 15–35 (GSLV…AWLA), 45–65 (LGTL…WILV), 85–105 (ILYI…SFIF), 142–162 (ALLN…GIAL), 193–213 (VGIF…ALLG), 217–237 (LLVV…PLIV), 301–321 (GAAV…GIPV), and 331–351 (VVSA…LLLI).

It belongs to the dicarboxylate/amino acid:cation symporter (DAACS) (TC 2.A.23) family.

The protein resides in the cell inner membrane. The enzyme catalyses L-serine(in) + Na(+)(in) = L-serine(out) + Na(+)(out). The catalysed reaction is L-threonine(in) + Na(+)(in) = L-threonine(out) + Na(+)(out). Involved in the import of serine and threonine into the cell, with the concomitant import of sodium (symport system). The chain is Serine/threonine transporter SstT from Photorhabdus laumondii subsp. laumondii (strain DSM 15139 / CIP 105565 / TT01) (Photorhabdus luminescens subsp. laumondii).